Reading from the N-terminus, the 228-residue chain is Ribosomal RNA large subunit methyltransferase E (228 aa).

Positions 76, 78, 99, 115, and 139 each coordinate S-adenosyl-L-methionine. Lys179 (proton acceptor) is an active-site residue.

Belongs to the class I-like SAM-binding methyltransferase superfamily. RNA methyltransferase RlmE family.

The protein localises to the cytoplasm. The enzyme catalyses uridine(2552) in 23S rRNA + S-adenosyl-L-methionine = 2'-O-methyluridine(2552) in 23S rRNA + S-adenosyl-L-homocysteine + H(+). In terms of biological role, specifically methylates the uridine in position 2552 of 23S rRNA at the 2'-O position of the ribose in the fully assembled 50S ribosomal subunit. The polypeptide is Ribosomal RNA large subunit methyltransferase E (Bradyrhizobium diazoefficiens (strain JCM 10833 / BCRC 13528 / IAM 13628 / NBRC 14792 / USDA 110)).